The following is a 418-amino-acid chain: Serine hydroxymethyltransferase (418 aa).

Residues Leu-121 and 125-127 contribute to the (6S)-5,6,7,8-tetrahydrofolate site; that span reads GHL. Residue Lys-230 is modified to N6-(pyridoxal phosphate)lysine. (6S)-5,6,7,8-tetrahydrofolate-binding positions include Glu-246 and 355–357; that span reads SPF.

It belongs to the SHMT family. As to quaternary structure, homodimer. The cofactor is pyridoxal 5'-phosphate.

The protein resides in the cytoplasm. The catalysed reaction is (6R)-5,10-methylene-5,6,7,8-tetrahydrofolate + glycine + H2O = (6S)-5,6,7,8-tetrahydrofolate + L-serine. Its pathway is one-carbon metabolism; tetrahydrofolate interconversion. It participates in amino-acid biosynthesis; glycine biosynthesis; glycine from L-serine: step 1/1. Catalyzes the reversible interconversion of serine and glycine with tetrahydrofolate (THF) serving as the one-carbon carrier. This reaction serves as the major source of one-carbon groups required for the biosynthesis of purines, thymidylate, methionine, and other important biomolecules. Also exhibits THF-independent aldolase activity toward beta-hydroxyamino acids, producing glycine and aldehydes, via a retro-aldol mechanism. The sequence is that of Serine hydroxymethyltransferase from Streptococcus pneumoniae serotype 19F (strain G54).